Here is a 151-residue protein sequence, read N- to C-terminus: Deoxyuridine 5'-triphosphate nucleotidohydrolase (151 aa).

Substrate contacts are provided by residues 70–72, Asn-83, 87–89, and Met-97; these read RSG and LID.

It belongs to the dUTPase family. Mg(2+) serves as cofactor.

The catalysed reaction is dUTP + H2O = dUMP + diphosphate + H(+). Its pathway is pyrimidine metabolism; dUMP biosynthesis; dUMP from dCTP (dUTP route): step 2/2. Functionally, this enzyme is involved in nucleotide metabolism: it produces dUMP, the immediate precursor of thymidine nucleotides and it decreases the intracellular concentration of dUTP so that uracil cannot be incorporated into DNA. This Pseudomonas fluorescens (strain ATCC BAA-477 / NRRL B-23932 / Pf-5) protein is Deoxyuridine 5'-triphosphate nucleotidohydrolase.